A 304-amino-acid polypeptide reads, in one-letter code: UDP-N-acetylenolpyruvoylglucosamine reductase (304 aa).

Positions 33–198 (RVGGPADILV…IEATVELESG (166 aa)) constitute an FAD-binding PCMH-type domain. Residue Arg-177 is part of the active site. Ser-227 (proton donor) is an active-site residue. Glu-297 is an active-site residue.

It belongs to the MurB family. The cofactor is FAD.

The protein localises to the cytoplasm. It carries out the reaction UDP-N-acetyl-alpha-D-muramate + NADP(+) = UDP-N-acetyl-3-O-(1-carboxyvinyl)-alpha-D-glucosamine + NADPH + H(+). It participates in cell wall biogenesis; peptidoglycan biosynthesis. Its function is as follows. Cell wall formation. The polypeptide is UDP-N-acetylenolpyruvoylglucosamine reductase (Clostridium perfringens (strain ATCC 13124 / DSM 756 / JCM 1290 / NCIMB 6125 / NCTC 8237 / Type A)).